The chain runs to 205 residues: Molybdenum cofactor guanylyltransferase (205 aa).

GTP-binding positions include 14–16 (LAG), Lys-27, Asp-77, and Asp-107. Residue Asp-107 coordinates Mg(2+).

It belongs to the MobA family. As to quaternary structure, monomer. Requires Mg(2+) as cofactor.

It is found in the cytoplasm. The enzyme catalyses Mo-molybdopterin + GTP + H(+) = Mo-molybdopterin guanine dinucleotide + diphosphate. Functionally, transfers a GMP moiety from GTP to Mo-molybdopterin (Mo-MPT) cofactor (Moco or molybdenum cofactor) to form Mo-molybdopterin guanine dinucleotide (Mo-MGD) cofactor. The polypeptide is Molybdenum cofactor guanylyltransferase (Burkholderia ambifaria (strain MC40-6)).